Here is a 264-residue protein sequence, read N- to C-terminus: ATP synthase subunit a (264 aa).

The next 6 membrane-spanning stretches (helical) occupy residues 27 to 47 (VHLD…FVFS), 87 to 107 (VGPL…IDLI), 131 to 151 (DISG…FYTI), 172 to 192 (LLIP…PVSL), 196 to 216 (LFGN…MYMA), and 230 to 250 (LAWA…FMML).

It belongs to the ATPase A chain family. As to quaternary structure, F-type ATPases have 2 components, CF(1) - the catalytic core - and CF(0) - the membrane proton channel. CF(1) has five subunits: alpha(3), beta(3), gamma(1), delta(1), epsilon(1). CF(0) has three main subunits: a(1), b(2) and c(9-12). The alpha and beta chains form an alternating ring which encloses part of the gamma chain. CF(1) is attached to CF(0) by a central stalk formed by the gamma and epsilon chains, while a peripheral stalk is formed by the delta and b chains.

The protein resides in the cell inner membrane. Its function is as follows. Key component of the proton channel; it plays a direct role in the translocation of protons across the membrane. In Pasteurella multocida (strain Pm70), this protein is ATP synthase subunit a.